A 572-amino-acid polypeptide reads, in one-letter code: Proline--tRNA ligase (572 aa).

Belongs to the class-II aminoacyl-tRNA synthetase family. ProS type 1 subfamily. Homodimer.

It localises to the cytoplasm. The catalysed reaction is tRNA(Pro) + L-proline + ATP = L-prolyl-tRNA(Pro) + AMP + diphosphate. In terms of biological role, catalyzes the attachment of proline to tRNA(Pro) in a two-step reaction: proline is first activated by ATP to form Pro-AMP and then transferred to the acceptor end of tRNA(Pro). As ProRS can inadvertently accommodate and process non-cognate amino acids such as alanine and cysteine, to avoid such errors it has two additional distinct editing activities against alanine. One activity is designated as 'pretransfer' editing and involves the tRNA(Pro)-independent hydrolysis of activated Ala-AMP. The other activity is designated 'posttransfer' editing and involves deacylation of mischarged Ala-tRNA(Pro). The misacylated Cys-tRNA(Pro) is not edited by ProRS. The polypeptide is Proline--tRNA ligase (Yersinia pseudotuberculosis serotype IB (strain PB1/+)).